The chain runs to 151 residues: 3-hydroxyacyl-[acyl-carrier-protein] dehydratase FabZ (151 aa).

Residue His-56 is part of the active site.

It belongs to the thioester dehydratase family. FabZ subfamily.

It localises to the cytoplasm. The enzyme catalyses a (3R)-hydroxyacyl-[ACP] = a (2E)-enoyl-[ACP] + H2O. Involved in unsaturated fatty acids biosynthesis. Catalyzes the dehydration of short chain beta-hydroxyacyl-ACPs and long chain saturated and unsaturated beta-hydroxyacyl-ACPs. The protein is 3-hydroxyacyl-[acyl-carrier-protein] dehydratase FabZ of Nitrobacter winogradskyi (strain ATCC 25391 / DSM 10237 / CIP 104748 / NCIMB 11846 / Nb-255).